The chain runs to 181 residues: ADP-ribosylation factor 3 (181 aa).

Gly2 carries N-myristoyl glycine lipidation. Residues 24–31, 67–71, and 126–129 each bind GTP; these read GLDAAGKT, DVGGQ, and NKQD.

It belongs to the small GTPase superfamily. Arf family. Interacts with PRKCABP. Interacts with PI4KB and NCS1/FREQ at the Golgi complex.

The protein localises to the golgi apparatus. It is found in the cytoplasm. Its subcellular location is the perinuclear region. In terms of biological role, GTP-binding protein that functions as an allosteric activator of the cholera toxin catalytic subunit, an ADP-ribosyltransferase. Involved in protein trafficking; may modulate vesicle budding and uncoating within the Golgi apparatus. This Bos taurus (Bovine) protein is ADP-ribosylation factor 3 (ARF3).